The chain runs to 275 residues: Myoblast determination protein 1 homolog 2 (275 aa).

One can recognise a bHLH domain in the interval 84–135 (DRRKAATMRERRRLGKVNDAFENLKRCTSNNPNQRLPKVEILRNAISYIESL). A compositionally biased stretch (polar residues) spans 232–265 (SGQEGSEGSPCSPQEGSILSRNGGTVPSPTNCPQ). Residues 232–275 (SGQEGSEGSPCSPQEGSILSRNGGTVPSPTNCPQPSHDPIYQVL) form a disordered region.

Efficient DNA binding requires dimerization with another bHLH protein.

The protein resides in the nucleus. May act as a transcriptional activator that promotes transcription of muscle-specific target genes and plays a role in muscle differentiation. This chain is Myoblast determination protein 1 homolog 2 (myod2), found in Oncorhynchus mykiss (Rainbow trout).